The following is an 89-amino-acid chain: Small ribosomal subunit protein uS17 (89 aa).

The protein belongs to the universal ribosomal protein uS17 family. In terms of assembly, part of the 30S ribosomal subunit.

In terms of biological role, one of the primary rRNA binding proteins, it binds specifically to the 5'-end of 16S ribosomal RNA. This chain is Small ribosomal subunit protein uS17, found in Xanthomonas campestris pv. campestris (strain B100).